A 143-amino-acid polypeptide reads, in one-letter code: MLDSDARLASDLSLAVMRLARQLRFRNPQSPVSLSQLSALTTLANEGAMTPGALAIRERVRPPSMTRVIASLADMGFVDREPHPVDGRQVLVSVSQSGAELVKAARRARQEWLVERLMTLNSDKRDILRNAADLILELIDESP.

The 133-residue stretch at 5-137 (DARLASDLSL…LRNAADLILE (133 aa)) folds into the HTH marR-type domain. Positions 51 to 74 (PGALAIRERVRPPSMTRVIASLAD) form a DNA-binding region, H-T-H motif.

In terms of assembly, homodimer.

This is an uncharacterized protein from Mycobacterium leprae (strain TN).